The chain runs to 69 residues: uncharacterized protein (69 aa).

Residues 5 to 60 (IREHRKELGLTQEELAERVGVTRQTIIALEKGRYSPSLILAHRIARALGREHIEDI) form the HTH cro/C1-type domain. The H-T-H motif DNA-binding region spans 16–35 (QEELAERVGVTRQTIIALEK).

This is an uncharacterized protein from Methanothermobacter thermautotrophicus (strain ATCC 29096 / DSM 1053 / JCM 10044 / NBRC 100330 / Delta H) (Methanobacterium thermoautotrophicum).